Here is a 421-residue protein sequence, read N- to C-terminus: 4-hydroxy-3-methylbut-2-en-1-yl diphosphate synthase (flavodoxin) (421 aa).

Positions 298, 301, 344, and 351 each coordinate [4Fe-4S] cluster.

The protein belongs to the IspG family. [4Fe-4S] cluster serves as cofactor.

The catalysed reaction is (2E)-4-hydroxy-3-methylbut-2-enyl diphosphate + oxidized [flavodoxin] + H2O + 2 H(+) = 2-C-methyl-D-erythritol 2,4-cyclic diphosphate + reduced [flavodoxin]. The protein operates within isoprenoid biosynthesis; isopentenyl diphosphate biosynthesis via DXP pathway; isopentenyl diphosphate from 1-deoxy-D-xylulose 5-phosphate: step 5/6. Its function is as follows. Converts 2C-methyl-D-erythritol 2,4-cyclodiphosphate (ME-2,4cPP) into 1-hydroxy-2-methyl-2-(E)-butenyl 4-diphosphate. In Neisseria meningitidis serogroup C / serotype 2a (strain ATCC 700532 / DSM 15464 / FAM18), this protein is 4-hydroxy-3-methylbut-2-en-1-yl diphosphate synthase (flavodoxin).